We begin with the raw amino-acid sequence, 31 residues long: MSDIN-like toxin proprotein 8 (31 aa).

Positions 1-10 (MSDINTARLP) are excised as a propeptide. Residues 11–18 (CIGFLGIP) constitute a cross-link (cyclopeptide (Cys-Pro)). Positions 19–31 (SVGDDIEMVLRHG) are excised as a propeptide.

Belongs to the MSDIN fungal toxin family. In terms of processing, processed by the macrocyclase-peptidase enzyme POPB to yield a toxic cyclic octapeptide. POPB first removes 10 residues from the N-terminus. Conformational trapping of the remaining peptide forces the enzyme to release this intermediate rather than proceed to macrocyclization. The enzyme rebinds the remaining peptide in a different conformation and catalyzes macrocyclization of the N-terminal 8 residues.

Its function is as follows. Probable toxin that belongs to the MSDIN-like toxin family responsible for a large number of food poisoning cases and deaths. The protein is MSDIN-like toxin proprotein 8 of Amanita bisporigera (Destroying angel).